The chain runs to 819 residues: DNA topoisomerase 4 subunit A (819 aa).

The region spanning 30 to 496 is the Topo IIA-type catalytic domain; the sequence is LPDIRDGLKP…QIIEIDTASL (467 aa). The O-(5'-phospho-DNA)-tyrosine intermediate role is filled by Tyr-118.

This sequence belongs to the type II topoisomerase GyrA/ParC subunit family. ParC type 2 subfamily. Heterotetramer composed of ParC and ParE.

It localises to the cell membrane. It catalyses the reaction ATP-dependent breakage, passage and rejoining of double-stranded DNA.. Topoisomerase IV is essential for chromosome segregation. It relaxes supercoiled DNA. Performs the decatenation events required during the replication of a circular DNA molecule. This Streptococcus pyogenes serotype M3 (strain SSI-1) protein is DNA topoisomerase 4 subunit A.